The chain runs to 343 residues: N(4)-bis(aminopropyl)spermidine synthase (343 aa).

It belongs to the branched-chain polyamine synthase family.

The protein localises to the cytoplasm. It carries out the reaction 2 S-adenosyl 3-(methylsulfanyl)propylamine + spermidine = N(4)-bis(aminopropyl)spermidine + 2 S-methyl-5'-thioadenosine + 2 H(+). Its pathway is amine and polyamine biosynthesis. Involved in the biosynthesis of branched-chain polyamines, which support the growth of thermophiles under high-temperature conditions. Catalyzes the sequential condensation of spermidine with the aminopropyl groups of decarboxylated S-adenosylmethionines to produce N(4)-bis(aminopropyl)spermidine via N(4)-aminopropylspermidine. The protein is N(4)-bis(aminopropyl)spermidine synthase of Thermus thermophilus.